Consider the following 100-residue polypeptide: Aspartyl/glutamyl-tRNA(Asn/Gln) amidotransferase subunit C (100 aa).

This sequence belongs to the GatC family. Heterotrimer of A, B and C subunits.

The catalysed reaction is L-glutamyl-tRNA(Gln) + L-glutamine + ATP + H2O = L-glutaminyl-tRNA(Gln) + L-glutamate + ADP + phosphate + H(+). It carries out the reaction L-aspartyl-tRNA(Asn) + L-glutamine + ATP + H2O = L-asparaginyl-tRNA(Asn) + L-glutamate + ADP + phosphate + 2 H(+). Allows the formation of correctly charged Asn-tRNA(Asn) or Gln-tRNA(Gln) through the transamidation of misacylated Asp-tRNA(Asn) or Glu-tRNA(Gln) in organisms which lack either or both of asparaginyl-tRNA or glutaminyl-tRNA synthetases. The reaction takes place in the presence of glutamine and ATP through an activated phospho-Asp-tRNA(Asn) or phospho-Glu-tRNA(Gln). In Rickettsia bellii (strain OSU 85-389), this protein is Aspartyl/glutamyl-tRNA(Asn/Gln) amidotransferase subunit C.